The chain runs to 846 residues: uncharacterized protein (846 aa).

6 disordered regions span residues 159–217 (VPTF…INHI), 254–276 (CNLN…SNSN), 332–414 (NKLN…PLSI), 459–501 (GSSI…SNSL), 556–651 (QQQQ…NFND), and 803–846 (TTTT…NKNK). Positions 163–217 (HNQNQNNNNQNNNQNNNNNNNNNNNNNNNNNNNNNNNSQNNNNNQNNNNNHINHI) are enriched in low complexity. The segment covering 355 to 414 (LQSPNSQSLANSSANISSNALNQSSSSQQQQPQSTSQQQQQQHKMNSSSGNISPPLPLSI) has biased composition (low complexity). The segment covering 459 to 482 (GSSITPKNLSPLSSSAPNTPKQFA) has biased composition (polar residues). Composition is skewed to low complexity over residues 483-501 (SLSS…SNSL), 568-642 (QQQQ…QPNN), and 811-846 (NNNN…NKNK).

This is an uncharacterized protein from Dictyostelium discoideum (Social amoeba).